A 61-amino-acid polypeptide reads, in one-letter code: Large ribosomal subunit protein bL32 (61 aa).

Basic residues predominate over residues 1–16 (MAVPKRKTSPSKRGMR). Positions 1–35 (MAVPKRKTSPSKRGMRRSADGLKSATYVEDKNSGE) are disordered.

Belongs to the bacterial ribosomal protein bL32 family.

The chain is Large ribosomal subunit protein bL32 from Agrobacterium fabrum (strain C58 / ATCC 33970) (Agrobacterium tumefaciens (strain C58)).